The primary structure comprises 150 residues: MRVWIDADACPKAARDLIVKFALKRKFEVVMVAGQAVAKPAFAIVRLIVVPSGMDAADDYLVEHAVPGELVICSDVPLADRLVKKGVAALDPRGREFDERNMGDRLAARNLFTELREQGQVGGGQGAYGEREKQAFANALDRIIARLSKS.

It belongs to the UPF0178 family.

The chain is UPF0178 protein PputGB1_5282 from Pseudomonas putida (strain GB-1).